A 197-amino-acid chain; its full sequence is Imidazoleglycerol-phosphate dehydratase (197 aa).

The protein belongs to the imidazoleglycerol-phosphate dehydratase family.

It localises to the cytoplasm. It catalyses the reaction D-erythro-1-(imidazol-4-yl)glycerol 3-phosphate = 3-(imidazol-4-yl)-2-oxopropyl phosphate + H2O. It participates in amino-acid biosynthesis; L-histidine biosynthesis; L-histidine from 5-phospho-alpha-D-ribose 1-diphosphate: step 6/9. This Pseudomonas putida (strain GB-1) protein is Imidazoleglycerol-phosphate dehydratase.